Consider the following 325-residue polypeptide: Germination protease (325 aa).

The propeptide occupies 1–7 (MYNVRTD).

This sequence belongs to the peptidase A25 family. As to quaternary structure, homotetramer. In terms of processing, autoproteolytically processed. The inactive tetrameric zymogen termed p46 autoprocesses to a smaller form termed p41, which is active only during spore germination.

The catalysed reaction is Endopeptidase action with P4 Glu or Asp, P1 preferably Glu &gt; Asp, P1' hydrophobic and P2' Ala.. Functionally, initiates the rapid degradation of small, acid-soluble proteins during spore germination. This chain is Germination protease, found in Clostridium perfringens (strain 13 / Type A).